The chain runs to 383 residues: Protein salvador homolog 1 (383 aa).

Ser-94 and Ser-136 each carry phosphoserine. WW domains follow at residues 199-232 (LPLP…HPLE) and 234-267 (EGLP…HPCA). Thr-210 is subject to Phosphothreonine. The region spanning 321–368 (ILKWELFQLADLDTYQGMLKLLFMKELEQIVKMYEAYRQALLTELENR) is the SARAH domain. The stretch at 344–373 (MKELEQIVKMYEAYRQALLTELENRKQRQQ) forms a coiled coil.

Homodimer. Stabilized through interaction with STK3/MST2 or STK4/MST1. Interacts (via SARAH domain) with isoform 1 of NEK2. Interacts with ESR1 only in the presence of STK3/MST2. Interacts with WTIP and AJUBA. Post-translationally, phosphorylated by STK3/MST2 and STK4/MST1. Phosphorylation is not required for SAV1 stability and may increase the number of protein binding sites on the scaffold molecule. Ubiquitously expressed in adult tissues with highest expression in the pancreas, aorta and interventricular septum and lowest expression in skeletal muscle. Expression was higher in fetal than in the adult heart. Expressed in various cell lines.

The protein localises to the nucleus. It is found in the cytoplasm. Its function is as follows. Regulator of STK3/MST2 and STK4/MST1 in the Hippo signaling pathway which plays a pivotal role in organ size control and tumor suppression by restricting proliferation and promoting apoptosis. The core of this pathway is composed of a kinase cascade wherein STK3/MST2 and STK4/MST1, in complex with its regulatory protein SAV1, phosphorylates and activates LATS1/2 in complex with its regulatory protein MOB1, which in turn phosphorylates and inactivates YAP1 oncoprotein and WWTR1/TAZ. Phosphorylation of YAP1 by LATS1/2 inhibits its translocation into the nucleus to regulate cellular genes important for cell proliferation, cell death, and cell migration. SAV1 is required for STK3/MST2 and STK4/MST1 activation and promotes cell-cycle exit and terminal differentiation in developing epithelial tissues. Plays a role in centrosome disjunction by regulating the localization of NEK2 to centrosomes, and its ability to phosphorylate CROCC and CEP250. In conjunction with STK3/MST2, activates the transcriptional activity of ESR1 through the modulation of its phosphorylation. In Homo sapiens (Human), this protein is Protein salvador homolog 1.